The primary structure comprises 61 residues: Small ribosomal subunit protein uS14 (61 aa).

Residues Cys24, Cys27, Cys40, and Cys43 each contribute to the Zn(2+) site.

Belongs to the universal ribosomal protein uS14 family. Zinc-binding uS14 subfamily. In terms of assembly, part of the 30S ribosomal subunit. Contacts proteins S3 and S10. The cofactor is Zn(2+).

Binds 16S rRNA, required for the assembly of 30S particles and may also be responsible for determining the conformation of the 16S rRNA at the A site. This chain is Small ribosomal subunit protein uS14, found in Roseiflexus castenholzii (strain DSM 13941 / HLO8).